The sequence spans 436 residues: Glutamyl-tRNA reductase (436 aa).

Substrate-binding positions include 49-52 (TCNR), serine 109, 114-116 (EGQ), and glutamine 120. Cysteine 50 serves as the catalytic Nucleophile. 198-203 (GAGRMS) provides a ligand contact to NADP(+).

The protein belongs to the glutamyl-tRNA reductase family. In terms of assembly, homodimer.

The enzyme catalyses (S)-4-amino-5-oxopentanoate + tRNA(Glu) + NADP(+) = L-glutamyl-tRNA(Glu) + NADPH + H(+). The protein operates within porphyrin-containing compound metabolism; protoporphyrin-IX biosynthesis; 5-aminolevulinate from L-glutamyl-tRNA(Glu): step 1/2. It functions in the pathway porphyrin-containing compound metabolism; chlorophyll biosynthesis. Functionally, catalyzes the NADPH-dependent reduction of glutamyl-tRNA(Glu) to glutamate 1-semialdehyde (GSA). The protein is Glutamyl-tRNA reductase of Prochlorococcus marinus (strain MIT 9215).